Reading from the N-terminus, the 420-residue chain is Zinc finger protein Pegasus (420 aa).

A Glycyl lysine isopeptide (Lys-Gly) (interchain with G-Cter in SUMO2) cross-link involves residue Lys5. 3 C2H2-type zinc fingers span residues 82–104, 110–132, and 138–161; these read LKCR…IRIH, HRCH…MRSH, and YKCE…RRKH. A Glycyl lysine isopeptide (Lys-Gly) (interchain with G-Cter in SUMO2) cross-link involves residue Lys185. Composition is skewed to polar residues over residues 223–236 and 262–273; these read QTDS…TTPT and LSSLPPENQNPA. Disordered stretches follow at residues 223 to 247 and 262 to 356; these read QTDS…QELM and LSSL…PALP. Residues 290-311 show a composition bias toward low complexity; it reads QPSTQAVVSAVSASIPQSSSPT. Polar residues predominate over residues 332 to 349; sequence SEPSAHTSTPSIGNSQPS. A C2H2-type 4; degenerate zinc finger spans residues 364–387; sequence HHCQHCDMYFFADNILYTIHMGCH. The segment at 393–417 adopts a C2H2-type 5 zinc-finger fold; sequence FQCNICGCKCKNKYDFACHFARGQH.

This sequence belongs to the Ikaros C2H2-type zinc-finger protein family. Self-associates. Interacts with other family members; IKZF1, IKZF2, IKZF3 and IKZF4.

The protein localises to the nucleus. Its function is as follows. Transcriptional repressor that binds the core 5'GNNTGTNG-3' DNA consensus sequence. Involved in megakaryocyte differentiation. This Pongo abelii (Sumatran orangutan) protein is Zinc finger protein Pegasus (IKZF5).